We begin with the raw amino-acid sequence, 323 residues long: HPr kinase/phosphorylase (323 aa).

Residues His-146 and Lys-167 contribute to the active site. Residue 161 to 168 (GESGLGKS) participates in ATP binding. Ser-168 is a binding site for Mg(2+). The active-site Proton acceptor; for phosphorylation activity. Proton donor; for dephosphorylation activity is the Asp-185. An important for the catalytic mechanism of both phosphorylation and dephosphorylation region spans residues 209–218 (LEVRGLGLLD). Glu-210 provides a ligand contact to Mg(2+). Arg-250 is an active-site residue. The important for the catalytic mechanism of dephosphorylation stretch occupies residues 271-276 (QVAAGR).

The protein belongs to the HPrK/P family. In terms of assembly, homohexamer. It depends on Mg(2+) as a cofactor.

It catalyses the reaction [HPr protein]-L-serine + ATP = [HPr protein]-O-phospho-L-serine + ADP + H(+). The catalysed reaction is [HPr protein]-O-phospho-L-serine + phosphate + H(+) = [HPr protein]-L-serine + diphosphate. Catalyzes the ATP- as well as the pyrophosphate-dependent phosphorylation of a specific serine residue in HPr, a phosphocarrier protein of the phosphoenolpyruvate-dependent sugar phosphotransferase system (PTS). HprK/P also catalyzes the pyrophosphate-producing, inorganic phosphate-dependent dephosphorylation (phosphorolysis) of seryl-phosphorylated HPr (P-Ser-HPr). The polypeptide is HPr kinase/phosphorylase (Cupriavidus pinatubonensis (strain JMP 134 / LMG 1197) (Cupriavidus necator (strain JMP 134))).